Consider the following 466-residue polypeptide: Asparagine--tRNA ligase (466 aa).

It belongs to the class-II aminoacyl-tRNA synthetase family. Homodimer.

The protein resides in the cytoplasm. It catalyses the reaction tRNA(Asn) + L-asparagine + ATP = L-asparaginyl-tRNA(Asn) + AMP + diphosphate + H(+). This Yersinia enterocolitica serotype O:8 / biotype 1B (strain NCTC 13174 / 8081) protein is Asparagine--tRNA ligase.